The chain runs to 273 residues: Testis-specific serine/threonine-protein kinase 6 (273 aa).

Residues tyrosine 12 to leucine 267 form the Protein kinase domain. Residues isoleucine 18–valine 26 and lysine 41 each bind ATP. Catalysis depends on aspartate 135, which acts as the Proton acceptor.

The protein belongs to the protein kinase superfamily. CAMK Ser/Thr protein kinase family. As to quaternary structure, microtubule inner protein component of sperm flagellar doublet microtubules. Interacts with HSP90; this interaction stabilizes and activates TSSK6. Interacts with the heat shock proteins HSPCB, HSPA8 and HSPA1A. These interactions appear to be required for TSSK6 kinase activity. Interacts with TSACC; this interaction is direct and recruits TSACC to HSP90, which is essential for kinase activity. Mg(2+) is required as a cofactor. Post-translationally, autophosphorylated. In terms of processing, ubiquitinated; HSP90 activity negatively regulates ubiquitination and degradation. As to expression, expressed in the testis, localized to the heads of elongating spermatids.

It is found in the cytoplasm. It localises to the cytoskeleton. Its subcellular location is the flagellum axoneme. The protein resides in the nucleus. The catalysed reaction is L-seryl-[protein] + ATP = O-phospho-L-seryl-[protein] + ADP + H(+). It catalyses the reaction L-threonyl-[protein] + ATP = O-phospho-L-threonyl-[protein] + ADP + H(+). Its function is as follows. Serine/threonine-protein kinase component of the sperm flagellar doublet microtubules. May act as a regulator of sperm motility by mediating phosphorylation of sperm doublet microtubule proteins. Plays a role in DNA condensation during postmeiotic chromatin remodeling and histone-to-protamine transition during spermatogenesis. The sequence is that of Testis-specific serine/threonine-protein kinase 6 from Mus musculus (Mouse).